Consider the following 238-residue polypeptide: MIAFIVLLSLAAVLQQSSGTVDFASESSNKGENQKQIVKKHNALRRSVKPPARNMLQMEWNSRAAQNAKRWAERCSFTHSPPSLRTVGKLRCGENLLQSSQPLPWSKVVQAWYDENKNFVYGIGAKPPGSVVGHYTQVVWYKSRLLGCASVKCSPTKYLYVCQYCPAGNIIGSQATPYKSGPRCADCPSACVKGLCTNPCKREDDYSNCKSLAEKNKCMEEWMKSKCPASCFCHNKII.

The first 19 residues, Met1–Gly19, serve as a signal peptide directing secretion. A propeptide spanning residues Thr20–Ser27 is cleaved from the precursor. Positions Lys39–Tyr164 constitute an SCP domain. 8 disulfides stabilise this stretch: Cys75/Cys153, Cys92/Cys165, Cys148/Cys162, Cys184/Cys191, Cys187/Cys196, Cys200/Cys233, Cys209/Cys227, and Cys218/Cys231. Residues Cys200–Cys233 enclose the ShKT domain.

Belongs to the CRISP family. Expressed by the venom gland.

The protein resides in the secreted. Functionally, blocks olfactory (CNGA2) and retinal (CNGA1) cyclic nucleotide-gated (CNG) ion channel currents. Does not inhibit retinal (CNGA3) currents. It forms high-affinity contacts with the pore turret region and most likely inhibits CNG channel current by blocking the external entrance to the transmembrane pore. Does not affect neither depolarization- nor caffeine-induced contraction arterial smooth muscle. This chain is Cysteine-rich venom protein, found in Demansia vestigiata (Lesser black whip snake).